The following is a 62-amino-acid chain: Venom protein 51.1 (62 aa).

A signal peptide spans 1-25; that stretch reads MKFFGILLIVTMVVLVMIATTYVES. Disulfide bonds link cysteine 32–cysteine 53, cysteine 39–cysteine 58, and cysteine 43–cysteine 60.

As to expression, expressed by the venom gland.

Its subcellular location is the secreted. Its function is as follows. Neurotoxin. Decreases the action potential of myelinated nerves in mice and frogs. This chain is Venom protein 51.1, found in Lychas mucronatus (Chinese swimming scorpion).